Reading from the N-terminus, the 347-residue chain is Heat-inducible transcription repressor HrcA (347 aa).

It belongs to the HrcA family.

In terms of biological role, negative regulator of class I heat shock genes (grpE-dnaK-dnaJ and groELS operons). Prevents heat-shock induction of these operons. This Enterococcus faecalis (strain ATCC 700802 / V583) protein is Heat-inducible transcription repressor HrcA.